Consider the following 404-residue polypeptide: Phosphopentomutase (404 aa).

Asp10, Asp303, His308, Asp344, His345, and His356 together coordinate Mn(2+).

It belongs to the phosphopentomutase family. Mn(2+) is required as a cofactor.

Its subcellular location is the cytoplasm. The enzyme catalyses 2-deoxy-alpha-D-ribose 1-phosphate = 2-deoxy-D-ribose 5-phosphate. It catalyses the reaction alpha-D-ribose 1-phosphate = D-ribose 5-phosphate. The protein operates within carbohydrate degradation; 2-deoxy-D-ribose 1-phosphate degradation; D-glyceraldehyde 3-phosphate and acetaldehyde from 2-deoxy-alpha-D-ribose 1-phosphate: step 1/2. Functionally, isomerase that catalyzes the conversion of deoxy-ribose 1-phosphate (dRib-1-P) and ribose 1-phosphate (Rib-1-P) to deoxy-ribose 5-phosphate (dRib-5-P) and ribose 5-phosphate (Rib-5-P), respectively. This is Phosphopentomutase from Shewanella sp. (strain MR-7).